The sequence spans 673 residues: Methionine--tRNA ligase (673 aa).

The short motif at 13-23 is the 'HIGH' region element; sequence PYTNGFCHLGH. Zn(2+) is bound by residues Cys-144, Cys-147, Cys-156, and Cys-160. The short motif at 325–329 is the 'KMSKS' region element; that stretch reads KFSKS. Lys-328 is an ATP binding site. Positions 575 to 673 constitute a tRNA-binding domain; sequence DVAKLDLRVG…KDVPEGTKVH (99 aa).

The protein belongs to the class-I aminoacyl-tRNA synthetase family. MetG type 1 subfamily. In terms of assembly, homodimer. Requires Zn(2+) as cofactor.

It is found in the cytoplasm. The enzyme catalyses tRNA(Met) + L-methionine + ATP = L-methionyl-tRNA(Met) + AMP + diphosphate. In terms of biological role, is required not only for elongation of protein synthesis but also for the initiation of all mRNA translation through initiator tRNA(fMet) aminoacylation. The sequence is that of Methionine--tRNA ligase from Methanocorpusculum labreanum (strain ATCC 43576 / DSM 4855 / Z).